Consider the following 481-residue polypeptide: Protein nucleotidyltransferase YdiU (481 aa).

Residues glycine 85, glycine 87, arginine 88, lysine 108, aspartate 120, glycine 121, arginine 171, and arginine 178 each coordinate ATP. Residue aspartate 248 is the Proton acceptor of the active site. Residues asparagine 249 and aspartate 258 each coordinate Mg(2+). ATP is bound at residue aspartate 258. The interval 458–481 is disordered; it reads HPGLAEFQQPPTPEQKGLQLSCSS.

It belongs to the SELO family. Requires Mg(2+) as cofactor. Mn(2+) serves as cofactor.

The catalysed reaction is L-seryl-[protein] + ATP = 3-O-(5'-adenylyl)-L-seryl-[protein] + diphosphate. It carries out the reaction L-threonyl-[protein] + ATP = 3-O-(5'-adenylyl)-L-threonyl-[protein] + diphosphate. It catalyses the reaction L-tyrosyl-[protein] + ATP = O-(5'-adenylyl)-L-tyrosyl-[protein] + diphosphate. The enzyme catalyses L-histidyl-[protein] + UTP = N(tele)-(5'-uridylyl)-L-histidyl-[protein] + diphosphate. The catalysed reaction is L-seryl-[protein] + UTP = O-(5'-uridylyl)-L-seryl-[protein] + diphosphate. It carries out the reaction L-tyrosyl-[protein] + UTP = O-(5'-uridylyl)-L-tyrosyl-[protein] + diphosphate. Its function is as follows. Nucleotidyltransferase involved in the post-translational modification of proteins. It can catalyze the addition of adenosine monophosphate (AMP) or uridine monophosphate (UMP) to a protein, resulting in modifications known as AMPylation and UMPylation. The sequence is that of Protein nucleotidyltransferase YdiU from Hydrogenovibrio crunogenus (strain DSM 25203 / XCL-2) (Thiomicrospira crunogena).